The sequence spans 358 residues: Aminomethyltransferase (358 aa).

This sequence belongs to the GcvT family. As to quaternary structure, the glycine cleavage system is composed of four proteins: P, T, L and H.

It catalyses the reaction N(6)-[(R)-S(8)-aminomethyldihydrolipoyl]-L-lysyl-[protein] + (6S)-5,6,7,8-tetrahydrofolate = N(6)-[(R)-dihydrolipoyl]-L-lysyl-[protein] + (6R)-5,10-methylene-5,6,7,8-tetrahydrofolate + NH4(+). Its function is as follows. The glycine cleavage system catalyzes the degradation of glycine. The protein is Aminomethyltransferase of Francisella tularensis subsp. holarctica (strain FTNF002-00 / FTA).